The chain runs to 1568 residues: Plexin-C1 (1568 aa).

The N-terminal stretch at 1 to 34 (MEVSRRKAPPRPPRPAAPLPLLAYLLALAAPGRG) is a signal peptide. In terms of domain architecture, Sema spans 35–452 (ADEPVWRSEQ…AGKEVRRIRV (418 aa)). Topologically, residues 35-944 (ADEPVWRSEQ…YVEQESVPST (910 aa)) are extracellular. An intrachain disulfide couples C64 to C87. N86, N141, and N149 each carry an N-linked (GlcNAc...) asparagine glycan. 3 disulfides stabilise this stretch: C156/C194, C226/C354, and C283/C329. N241 and N252 each carry an N-linked (GlcNAc...) asparagine glycan. N386 and N407 each carry an N-linked (GlcNAc...) asparagine glycan. Disulfide bonds link C455–C472, C461–C506, C464–C481, and C475–C487. N-linked (GlcNAc...) asparagine glycosylation is found at N548, N582, N653, N692, N771, N796, N821, N871, and N890. Residues 945–965 (WYFLIVLPVLLVIVIFAAVGV) form a helical membrane-spanning segment. Over 966–1568 (TRHKSKELSR…FDEKKKCKWM (603 aa)) the chain is Cytoplasmic. S978 bears the Phosphoserine mark.

This sequence belongs to the plexin family. In terms of assembly, monomer. Homodimer. Interacts with SEMA7A. Post-translationally, N-glycosylated. In terms of tissue distribution, detected in heart, brain, lung, spleen and placenta.

It is found in the membrane. Its function is as follows. Receptor for SEMA7A, for smallpox semaphorin A39R, vaccinia virus semaphorin A39R and for herpesvirus Sema protein. Binding of semaphorins triggers cellular responses leading to the rearrangement of the cytoskeleton and to secretion of IL6 and IL8. The polypeptide is Plexin-C1 (PLXNC1) (Homo sapiens (Human)).